The primary structure comprises 344 residues: Arginine N-succinyltransferase (344 aa).

Succinyl-CoA is bound at residue Leu125. Residue His229 is the Proton donor of the active site.

This sequence belongs to the arginine N-succinyltransferase family.

It carries out the reaction succinyl-CoA + L-arginine = N(2)-succinyl-L-arginine + CoA + H(+). Its pathway is amino-acid degradation; L-arginine degradation via AST pathway; L-glutamate and succinate from L-arginine: step 1/5. Catalyzes the transfer of succinyl-CoA to arginine to produce N(2)-succinylarginine. This Salmonella arizonae (strain ATCC BAA-731 / CDC346-86 / RSK2980) protein is Arginine N-succinyltransferase.